The primary structure comprises 107 residues: Phycocyanobilin lyase subunit beta (107 aa).

It belongs to the CpcE/RpcE/PecE family. As to quaternary structure, cpcE and CpcF associate to form a lyase.

Required for the chromophorylation of the CpcA gene product. This chain is Phycocyanobilin lyase subunit beta (cpcF), found in Mastigocladus laminosus (Fischerella sp.).